The following is a 262-amino-acid chain: Ribosomal RNA small subunit methyltransferase A (262 aa).

Residues asparagine 14, leucine 16, glycine 41, glutamate 62, aspartate 87, and asparagine 109 each contribute to the S-adenosyl-L-methionine site.

Belongs to the class I-like SAM-binding methyltransferase superfamily. rRNA adenine N(6)-methyltransferase family. RsmA subfamily.

It is found in the cytoplasm. The enzyme catalyses adenosine(1518)/adenosine(1519) in 16S rRNA + 4 S-adenosyl-L-methionine = N(6)-dimethyladenosine(1518)/N(6)-dimethyladenosine(1519) in 16S rRNA + 4 S-adenosyl-L-homocysteine + 4 H(+). In terms of biological role, specifically dimethylates two adjacent adenosines (A1518 and A1519) in the loop of a conserved hairpin near the 3'-end of 16S rRNA in the 30S particle. May play a critical role in biogenesis of 30S subunits. This is Ribosomal RNA small subunit methyltransferase A from Francisella tularensis subsp. holarctica (strain FTNF002-00 / FTA).